The chain runs to 189 residues: Proline-rich protein 29 (189 aa).

Residues 152–189 (SREREVRAVPPPPPPSATGTVGADVPPASDYYDAESLL) are disordered.

This Homo sapiens (Human) protein is Proline-rich protein 29 (PRR29).